Reading from the N-terminus, the 117-residue chain is Large ribosomal subunit protein bL20 (117 aa).

The protein belongs to the bacterial ribosomal protein bL20 family.

Its function is as follows. Binds directly to 23S ribosomal RNA and is necessary for the in vitro assembly process of the 50S ribosomal subunit. It is not involved in the protein synthesizing functions of that subunit. This is Large ribosomal subunit protein bL20 from Rickettsia akari (strain Hartford).